We begin with the raw amino-acid sequence, 206 residues long: Pyridoxine/pyridoxamine 5'-phosphate oxidase (206 aa).

Residues R49 to K54, Y69 to T70, K76, and Q98 each bind FMN. K54 contributes to the substrate binding site. Y116, R120, and S124 together coordinate substrate. Residues Q133 to S134 and W177 contribute to the FMN site. Substrate is bound at residue R183–H185. R187 lines the FMN pocket.

This sequence belongs to the pyridoxamine 5'-phosphate oxidase family. As to quaternary structure, homodimer. Requires FMN as cofactor.

The catalysed reaction is pyridoxamine 5'-phosphate + O2 + H2O = pyridoxal 5'-phosphate + H2O2 + NH4(+). The enzyme catalyses pyridoxine 5'-phosphate + O2 = pyridoxal 5'-phosphate + H2O2. It participates in cofactor metabolism; pyridoxal 5'-phosphate salvage; pyridoxal 5'-phosphate from pyridoxamine 5'-phosphate: step 1/1. It functions in the pathway cofactor metabolism; pyridoxal 5'-phosphate salvage; pyridoxal 5'-phosphate from pyridoxine 5'-phosphate: step 1/1. Functionally, catalyzes the oxidation of either pyridoxine 5'-phosphate (PNP) or pyridoxamine 5'-phosphate (PMP) into pyridoxal 5'-phosphate (PLP). The polypeptide is Pyridoxine/pyridoxamine 5'-phosphate oxidase (Jannaschia sp. (strain CCS1)).